A 128-amino-acid chain; its full sequence is Large ribosomal subunit protein bL17 (128 aa).

Belongs to the bacterial ribosomal protein bL17 family. As to quaternary structure, part of the 50S ribosomal subunit. Contacts protein L32.

The protein is Large ribosomal subunit protein bL17 of Streptococcus agalactiae serotype Ia (strain ATCC 27591 / A909 / CDC SS700).